The primary structure comprises 780 residues: LPS-assembly protein LptD (780 aa).

The first 24 residues, 1-24, serve as a signal peptide directing secretion; it reads MKKRFPTLLATLIWTALYSQHTLA.

Belongs to the LptD family. Component of the lipopolysaccharide transport and assembly complex. Interacts with LptE and LptA.

Its subcellular location is the cell outer membrane. Functionally, together with LptE, is involved in the assembly of lipopolysaccharide (LPS) at the surface of the outer membrane. In Yersinia pestis bv. Antiqua (strain Antiqua), this protein is LPS-assembly protein LptD.